Reading from the N-terminus, the 163-residue chain is S-ribosylhomocysteine lyase (163 aa).

3 residues coordinate Fe cation: His54, His58, and Cys128.

This sequence belongs to the LuxS family. As to quaternary structure, homodimer. Fe cation serves as cofactor.

It carries out the reaction S-(5-deoxy-D-ribos-5-yl)-L-homocysteine = (S)-4,5-dihydroxypentane-2,3-dione + L-homocysteine. Its function is as follows. Involved in the synthesis of autoinducer 2 (AI-2) which is secreted by bacteria and is used to communicate both the cell density and the metabolic potential of the environment. The regulation of gene expression in response to changes in cell density is called quorum sensing. Catalyzes the transformation of S-ribosylhomocysteine (RHC) to homocysteine (HC) and 4,5-dihydroxy-2,3-pentadione (DPD). This is S-ribosylhomocysteine lyase from Wolinella succinogenes (strain ATCC 29543 / DSM 1740 / CCUG 13145 / JCM 31913 / LMG 7466 / NCTC 11488 / FDC 602W) (Vibrio succinogenes).